We begin with the raw amino-acid sequence, 428 residues long: MSYLVTIIAFIIVFGVLVTVHEYGHMFFAKRAGIMCPEFAIGMGPKIFSFRKNETLYTIRLLPVGGYVRMAGDGLEEPPVEPGMNVKIKLNEENEITHIILDDHHKFQQIEAIEVKKCDFKDDLFIEGITAYDNERHHFKIARKSFFVENGSLVQIAPRDRQFAHKKPWPKFLTLFAGPLFNFILALVLFIGLAYYQGTPTSTVEQVADKYPAQQAGLQKGDKIVQIGKYKISEFDDVDKALDKVKDNKTTVKFERDGKTKSVELTPKKTERKLTKVSSETKYVLGFQPASERTLFKPIVYGFESFLKGSTLIFTAVVGMLASIFTGGFSFDMLNGPVGIYHNVDSVVKAGIISLIGYTALLSVNLGIMNLIPIPALDGGRILFVIYEAIFRKPVNKKAETTIIAIGAIFMVVIMILVTWNDIRRYFL.

His-21 is a binding site for Zn(2+). The active site involves Glu-22. Zn(2+) is bound at residue His-25. 4 consecutive transmembrane segments (helical) span residues 172–194 (FLTL…IGLA), 309–331 (GSTL…GFSF), 352–374 (IISL…LIPI), and 401–420 (TTII…LVTW). Residues 186 to 269 (ALVLFIGLAY…TKSVELTPKK (84 aa)) form the PDZ domain.

It belongs to the peptidase M50B family. The cofactor is Zn(2+).

The protein localises to the cell membrane. In Staphylococcus aureus (strain MSSA476), this protein is Putative zinc metalloprotease SAS1196.